We begin with the raw amino-acid sequence, 270 residues long: tRNA pseudouridine synthase A (270 aa).

The Nucleophile role is filled by Asp-60. Position 118 (Tyr-118) interacts with substrate.

Belongs to the tRNA pseudouridine synthase TruA family. Homodimer.

It catalyses the reaction uridine(38/39/40) in tRNA = pseudouridine(38/39/40) in tRNA. Its function is as follows. Formation of pseudouridine at positions 38, 39 and 40 in the anticodon stem and loop of transfer RNAs. The sequence is that of tRNA pseudouridine synthase A from Cronobacter sakazakii (strain ATCC BAA-894) (Enterobacter sakazakii).